The primary structure comprises 239 residues: Ion-translocating oxidoreductase complex subunit E (239 aa).

Helical transmembrane passes span 41–61 (LGLG…VSLV), 71–91 (LPAF…LMQA), 95–115 (ELYQ…VILG), 130–150 (SFDG…LGGL), and 184–204 (GFLL…LIAL).

It belongs to the NqrDE/RnfAE family. The complex is composed of six subunits: RnfA, RnfB, RnfC, RnfD, RnfE and RnfG.

It is found in the cell inner membrane. In terms of biological role, part of a membrane-bound complex that couples electron transfer with translocation of ions across the membrane. In Pseudomonas paraeruginosa (strain DSM 24068 / PA7) (Pseudomonas aeruginosa (strain PA7)), this protein is Ion-translocating oxidoreductase complex subunit E.